The chain runs to 484 residues: MAELRPSGAPGPTAPPAPGPTAPPAFASLFPPGLHAIYGECRRLYPDQPNPLQVTAIVKYWLGGPDPLDYVSMYRNVGSPSANIPEHWHYISFGLSDLYGDNRVHEFTGTDGPSGFGFELTFRLKRETGESAPPTWPAELMQGLARYVFQSENTFCSGDHVSWHSPLDNSESRIQHMLLTEDPQMQPVQTPFGVVTFLQIVGVCTEELHSAQQWNGQGILELLRTVPIAGGPWLITDMRRGETIFEIDPHLQERVDKGIETDGSNLSGVSAKCAWDDLSRPPEDDEDSRSICIGTQPRRLSGKDTEQIRETLRRGLEINSKPVLPPINPQRQNGLAHDRAPSRKDSLESDSSTAIIPHELIRTRQLESVHLKFNQESGALIPLCLRGRLLHGRHFTYKSITGDMAITFVSTGVEGAFATEEHPYAAHGPWLQILLTEEFVEKMLEDLEDLTSPEEFKLPKEYSWPEKKLKVSILPDVVFDSPLH.

Residues 1 to 24 form a disordered region; it reads MAELRPSGAPGPTAPPAPGPTAPP. A compositionally biased stretch (pro residues) spans 12–23; that stretch reads PTAPPAPGPTAP. Residue Lys257 forms a Glycyl lysine isopeptide (Lys-Gly) (interchain with G-Cter in ubiquitin) linkage. The disordered stretch occupies residues 279 to 360; that stretch reads SRPPEDDEDS…SSTAIIPHEL (82 aa). Ser301 bears the Phosphoserine mark. Lys303 is modified (N6-acetyllysine). Lys321 is covalently cross-linked (Glycyl lysine isopeptide (Lys-Gly) (interchain with G-Cter in SUMO2)). Residues 336–347 show a composition bias toward basic and acidic residues; that stretch reads AHDRAPSRKDSL. Ser342, Ser346, and Ser352 each carry phosphoserine. Thr353 is subject to Phosphothreonine. Ser481 bears the Phosphoserine mark.

Belongs to the SUFU family. May form homodimers. Part of a DNA-bound corepressor complex containing SAP18, GLI1 and SIN3. Part of a complex containing CTNNB1. Binds BTRC, GLI2, GLI3, SAP18 and STK36. Binds both free and DNA-bound GLI1. Interacts with KIF7. Interacts with GLI3FL and this interaction regulates the formation of either repressor or activator forms of GLI3. Its association with GLI3FL is regulated by Hh signaling and dissociation of the SUFU-GLI3 interaction requires the presence of the ciliary motor KIF3A. Interacts with ULK3; inactivating the protein kinase activity of ULK3. Interacts with RAB23. Post-translationally, polyubiquitinated at Lys-257 by the SCF(FBXL17) complex, leading to its subsequent degradation and allowing the release of GLI1 for proper hedgehog/smoothened signal transduction. Ubiquitination is impaired by phosphorylation at Ser-342, Ser-346, Ser-352 and Thr-353. In terms of processing, phosphorylation at Ser-342, Ser-346, Ser-352 and Thr-353 prevents ubiquitination by the SCF(FBXL17) complex. As to expression, ubiquitous in adult tissues. Detected in osteoblasts of the perichondrium in the developing limb of 12-week old embryos. Isoform 1 is detected in fetal brain, lung, kidney and testis. Isoform 2 is detected in fetal testis, and at much lower levels in fetal brain, lung and kidney.

It is found in the cytoplasm. It localises to the nucleus. Its function is as follows. Negative regulator in the hedgehog/smoothened signaling pathway. Down-regulates GLI1-mediated transactivation of target genes. Down-regulates GLI2-mediated transactivation of target genes. Part of a corepressor complex that acts on DNA-bound GLI1. May also act by linking GLI1 to BTRC and thereby targeting GLI1 to degradation by the proteasome. Sequesters GLI1, GLI2 and GLI3 in the cytoplasm, this effect is overcome by binding of STK36 to both SUFU and a GLI protein. Negative regulator of beta-catenin signaling. Regulates the formation of either the repressor form (GLI3R) or the activator form (GLI3A) of the full-length form of GLI3 (GLI3FL). GLI3FL is complexed with SUFU in the cytoplasm and is maintained in a neutral state. Without the Hh signal, the SUFU-GLI3 complex is recruited to cilia, leading to the efficient processing of GLI3FL into GLI3R. When Hh signaling is initiated, SUFU dissociates from GLI3FL and the latter translocates to the nucleus, where it is phosphorylated, destabilized, and converted to a transcriptional activator (GLI3A). Required for normal embryonic development. Required for the proper formation of hair follicles and the control of epidermal differentiation. This Homo sapiens (Human) protein is Suppressor of fused homolog.